A 103-amino-acid chain; its full sequence is UPF0473 protein SGO_2040 (103 aa).

Belongs to the UPF0473 family.

This Streptococcus gordonii (strain Challis / ATCC 35105 / BCRC 15272 / CH1 / DL1 / V288) protein is UPF0473 protein SGO_2040.